The sequence spans 77 residues: MAAIEVGRVCIKTLGREAGNTCVIVEVLDKNFVVIDGSVKRRRCNLKHVEPTDKKVDLEKAASTEEVKLALDAAGLL.

This sequence belongs to the eukaryotic ribosomal protein eL14 family.

In Methanococcus maripaludis (strain C6 / ATCC BAA-1332), this protein is Large ribosomal subunit protein eL14.